Reading from the N-terminus, the 174-residue chain is SUSHI domain-containing protein E3 (174 aa).

A signal peptide spans Met-1–Ala-20. Residues Gln-35–Lys-97 form the Sushi domain. 2 disulfide bridges follow: Cys-37–Cys-78 and Cys-64–Cys-95. Residues Ser-108–His-127 show a composition bias toward low complexity. Residues Ser-108–Val-133 form a disordered region. Residues Phe-145 to Ile-165 traverse the membrane as a helical segment.

Its subcellular location is the host membrane. The sequence is that of SUSHI domain-containing protein E3 (E3) from Equine herpesvirus 2 (strain 86/87) (EHV-2).